A 301-amino-acid chain; its full sequence is 2-aminobenzoylacetyl-CoA thioesterase (301 aa).

The Fe cation site is built by His-69, His-71, Asp-73, His-74, His-159, Asp-178, and His-221.

It belongs to the metallo-beta-lactamase superfamily.

The catalysed reaction is (2-aminobenzoyl)acetyl-CoA + H2O = (2-aminobenzoyl)acetate + CoA + H(+). With respect to regulation, thioesterase activity, but not pyocyanine production, is inhibited by 2-(pyridin-3-yl)benzoic acid, 2-(1H-pyrrol-1-yl)benzoic acid and 3-methylthiophene-2-carboxylic acid. Compounds bind to the active center. Required for the biosynthesis of the quorum-sensing signaling molecules 2-heptyl-4(1H)-quinolone (HHQ) and 2-heptyl-3-hydroxy-4(1H)-quinolone (Pseudomonas quinolone signal or PQS), which are important for biofilm formation and virulence. Catalyzes the hydrolysis of the intermediate 2-aminobenzoylacetyl-CoA (2-ABA-CoA) to form 2-aminobenzoylacetate (2-ABA), the precursor of HHQ. In vitro, can also hydrolyze other substrates such as S-ethyl-acetothioacetate and acetoacetyl-CoA, but is inactive against anthraniloyl-CoA, malonyl-CoA and octanoyl-CoA. Beyond its thioesterase function, is involved in the regulation of diverse genes coding for key virulence determinants and biofilm development. The protein is 2-aminobenzoylacetyl-CoA thioesterase of Pseudomonas aeruginosa (strain ATCC 15692 / DSM 22644 / CIP 104116 / JCM 14847 / LMG 12228 / 1C / PRS 101 / PAO1).